We begin with the raw amino-acid sequence, 469 residues long: E3 ubiquitin-protein ligase TRIM21 (469 aa).

The RING-type zinc finger occupies 16–55 (CSICLDPMVEPMSIECGHSFCQECISEVGKEGGSVCPVCR). The B box-type zinc finger occupies 87-128 (PHGELCVVHREKIHLFCEEDGKALCWVCSQSQKHRDHPMVPI). Positions 92, 95, 114, and 120 each coordinate Zn(2+). Positions 128–245 (IEEAAQEYQE…RRGSALELLQ (118 aa)) form a coiled coil. Position 266 is a phosphoserine (Ser266). The 200-residue stretch at 268-467 (DLRNVFYVPG…APLILCPLKT (200 aa)) folds into the B30.2/SPRY domain.

It belongs to the TRIM/RBCC family. In terms of assembly, homotrimer. Interacts (via C-terminus) with IRF8 (via C-terminus). Component of a SCF(SKP2)-like complex containing CUL1, SKP1, TRIM21 and SKP2. Interacts with CALR, CUL1, FBXW11, HSPA5, IKBKB, IRF3, SKP1 and VCP. Interacts with SKP2; the interaction with SKP2 does not depend on an intact F-box domain. Interacts (via N-terminus and C-terminus) with DCP2 (via N-terminus and C-terminus). Interacts with ULK1, BECN1 and with ATG8 family members, including GABARAP, GABARAPL1, GABARAPL2 and MAP1LC3C/LC3C. Interacts with TRIM21 and SQSTM1/sequestosome 1. Interacts with IRF3. Interacts (via the SPRY domain) with NMI (via coiled-coil domain); the interaction promotes 'Lys-63'-linked ubiquitination of NMI. Interacts with IFI35 and NMI; the interaction facilitates NMI-IFI35 complex formation. Post-translationally, autoubiquitinated; does not lead to its proteasomal degradation. Deubiquitinated by USP4; leading to its stabilization.

It localises to the cytoplasm. It is found in the cytoplasmic vesicle. The protein resides in the autophagosome. Its subcellular location is the nucleus. The protein localises to the P-body. It localises to the stress granule. The enzyme catalyses S-ubiquitinyl-[E2 ubiquitin-conjugating enzyme]-L-cysteine + [acceptor protein]-L-lysine = [E2 ubiquitin-conjugating enzyme]-L-cysteine + N(6)-ubiquitinyl-[acceptor protein]-L-lysine.. The protein operates within protein modification; protein ubiquitination. Functionally, E3 ubiquitin-protein ligase whose activity is dependent on E2 enzymes, UBE2D1, UBE2D2, UBE2E1 and UBE2E2. Forms a ubiquitin ligase complex in cooperation with the E2 UBE2D2 that is used not only for the ubiquitination of USP4 and IKBKB but also for its self-ubiquitination. Component of cullin-RING-based SCF (SKP1-CUL1-F-box protein) E3 ubiquitin-protein ligase complexes such as SCF(SKP2)-like complexes. A TRIM21-containing SCF(SKP2)-like complex is shown to mediate ubiquitination of CDKN1B ('Thr-187' phosphorylated-form), thereby promoting its degradation by the proteasome. Monoubiquitinates IKBKB that will negatively regulates Tax-induced NF-kappa-B signaling. Negatively regulates IFN-beta production post-pathogen recognition by catalyzing polyubiquitin-mediated degradation of IRF3. Mediates the ubiquitin-mediated proteasomal degradation of IgG1 heavy chain, which is linked to the VCP-mediated ER-associated degradation (ERAD) pathway. Promotes IRF8 ubiquitination, which enhanced the ability of IRF8 to stimulate cytokine genes transcription in macrophages. Plays a role in the regulation of the cell cycle progression. Enhances the decapping activity of DCP2. Exists as a ribonucleoprotein particle present in all mammalian cells studied and composed of a single polypeptide and one of four small RNA molecules. At least two isoforms are present in nucleated and red blood cells, and tissue specific differences in RO/SSA proteins have been identified. The common feature of these proteins is their ability to bind HY RNAs.2. Involved in the regulation of innate immunity and the inflammatory response in response to IFNG/IFN-gamma. Organizes autophagic machinery by serving as a platform for the assembly of ULK1, Beclin 1/BECN1 and ATG8 family members and recognizes specific autophagy targets, thus coordinating target recognition with assembly of the autophagic apparatus and initiation of autophagy. Also regulates autophagy through FIP200/RB1CC1 ubiquitination and subsequent decreased protein stability. Represses the innate antiviral response by facilitating the formation of the NMI-IFI35 complex through 'Lys-63'-linked ubiquitination of NMI. During viral infection, promotes cell pyroptosis by mediating 'Lys-6'-linked ubiquitination of ISG12a/IFI27, facilitating its translocation into the mitochondria and subsequent CASP3 activation. When up-regulated through the IFN/JAK/STAT signaling pathway, promotes 'Lys-27'-linked ubiquitination of MAVS, leading to the recruitment of TBK1 and up-regulation of innate immunity. Mediates 'Lys-63'-linked polyubiquitination of G3BP1 in response to heat shock, leading to stress granule disassembly. The sequence is that of E3 ubiquitin-protein ligase TRIM21 (TRIM21) from Bos taurus (Bovine).